Here is a 4262-residue protein sequence, read N- to C-terminus: Polyketide synthase PksM (4262 aa).

An N-terminal hotdog fold 1 region spans residues 1-114; sequence MITEQLHISL…ADMHRKEQTA (114 aa). The PKS/mFAS DH 1 domain occupies 1 to 271; that stretch reads MITEQLHISL…GKSVRNMSAF (271 aa). Catalysis depends on His-18, which acts as the Proton acceptor; for dehydratase activity 1. The C-terminal hotdog fold 1 stretch occupies residues 129–271; it reads DRILNLDEIY…GKSVRNMSAF (143 aa). Catalysis depends on Asp-190, which acts as the Proton donor; for dehydratase activity 1. A Carrier 1 domain is found at 293 to 367; that stretch reads PAFEMYLRQL…ELAAHLADHY (75 aa). Ser-327 carries the post-translational modification O-(pantetheine 4'-phosphoryl)serine. Positions 393–831 constitute a Ketosynthase family 3 (KS3) 1 domain; that stretch reads GEDIAIIGMA…GSNAHLILEE (439 aa). Catalysis depends on for beta-ketoacyl synthase 1 activity residues Cys-569, His-704, and His-744. An N-terminal hotdog fold 2 region spans residues 1009–1135; that stretch reads HPLVHRNTSD…GRAVISDEAE (127 aa). The PKS/mFAS DH 2 domain occupies 1009 to 1301; it reads HPLVHRNTSD…MRALDGEQHS (293 aa). The active-site Proton acceptor; for dehydratase activity 2 is His-1038. A C-terminal hotdog fold 2 region spans residues 1149 to 1301; sequence SLDTVTSEQC…MRALDGEQHS (153 aa). Residue Asp-1211 is the Proton donor; for dehydratase activity 2 of the active site. The Carrier 2 domain maps to 2188-2261; sequence EKSTEYMKKL…ALVEHFIKTK (74 aa). At Ser-2222 the chain carries O-(pantetheine 4'-phosphoryl)serine. The segment covering 2275–2291 has biased composition (polar residues); it reads VQQHTPAESRTQSSQKP. The disordered stretch occupies residues 2275–2313; sequence VQQHTPAESRTQSSQKPDQAAKRTRRFRKLGFSGEKETP. One can recognise a Ketosynthase family 3 (KS3) 2 domain in the interval 2319–2734; that stretch reads SRDVAVIGIS…GSNAHIILEE (416 aa). Active-site for beta-ketoacyl synthase 2 activity residues include Cys-2476, His-2611, and His-2651. A coiled-coil region spans residues 2750–2826; sequence ALIVLSAKNM…DFIENKADSL (77 aa). Residues 3409 to 3486 enclose the Carrier 3 domain; it reads SIEKRLEHDL…ELISFFLTDH (78 aa). The residue at position 3446 (Ser-3446) is an O-(pantetheine 4'-phosphoryl)serine. The Ketosynthase family 3 (KS3) 3 domain maps to 3529 to 3944; it reads DEPIAIIGMS…GTNAHAVIEE (416 aa). Active-site for beta-ketoacyl synthase 3 activity residues include Cys-3690, His-3825, and His-3865. A coiled-coil region spans residues 4004 to 4033; it reads KAMEARLAIVANNQEQLVRKLKEYVEAMKN. One can recognise a Carrier 4 domain in the interval 4135–4212; sequence NGKTHIQKII…ALSDHLALKA (78 aa). Ser-4172 carries the O-(pantetheine 4'-phosphoryl)serine modification.

Pantetheine 4'-phosphate serves as cofactor.

The protein localises to the cytoplasm. It functions in the pathway antibiotic biosynthesis; bacillaene biosynthesis. Involved in some intermediate steps for the synthesis of the antibiotic polyketide bacillaene which is involved in secondary metabolism. This chain is Polyketide synthase PksM (pksM), found in Bacillus subtilis (strain 168).